A 162-amino-acid polypeptide reads, in one-letter code: Phosphopantetheine adenylyltransferase (162 aa).

Serine 11 provides a ligand contact to substrate. Residues 11-12 (SF) and histidine 19 contribute to the ATP site. Residues lysine 43, valine 76, and arginine 90 each contribute to the substrate site. ATP contacts are provided by residues 91–93 (GLR), glutamate 101, and 126–132 (HLYISSS).

It belongs to the bacterial CoaD family. As to quaternary structure, homohexamer. Requires Mg(2+) as cofactor.

It is found in the cytoplasm. It carries out the reaction (R)-4'-phosphopantetheine + ATP + H(+) = 3'-dephospho-CoA + diphosphate. It participates in cofactor biosynthesis; coenzyme A biosynthesis; CoA from (R)-pantothenate: step 4/5. Reversibly transfers an adenylyl group from ATP to 4'-phosphopantetheine, yielding dephospho-CoA (dPCoA) and pyrophosphate. The chain is Phosphopantetheine adenylyltransferase from Streptococcus pneumoniae (strain JJA).